Here is a 477-residue protein sequence, read N- to C-terminus: MEKHGTNEGALWGGRFSGGPSEAMFALSVSTHFDWVLAPYDVLASKAHAKVLHSAGLLSDADLDTMLEGLDQLGRDVADGSFGPLPSDEDVHGAMERGLIDRVGPEVGGRLRAGRSRNDQVATLFRMWVRDAIRGIAVGVTELIDALTTQAAAHPDAIMPGKTHFQAAQPVLLAHQLQAHAQPLLRDLERIRDLDKRLAVSPYGSGALAGSSLQLNPEAIAAELGFDSAADNSIDATSSRDFASEAAFVLAQIAVDMSRLAEEIIAWCTPEFGYIVLADAWSTGSSIMPQKKNPDVAELTRGKTGRLIGNLAGLLATLKAQPLAYNRDLQEDKEPIVDSVAQLNLLLPAMTGLVSTLTFNTDRMRELAPAGYTLATDLAEWMVREGVPFREAHEASGACVRIAEGRGVDLVDLTDEELAGVDPRLTPAVRDVLTIEGAVASRATRGGTAGDRVSEQRDRINQANADHLAWATTPVRS.

The protein belongs to the lyase 1 family. Argininosuccinate lyase subfamily.

It is found in the cytoplasm. It catalyses the reaction 2-(N(omega)-L-arginino)succinate = fumarate + L-arginine. It functions in the pathway amino-acid biosynthesis; L-arginine biosynthesis; L-arginine from L-ornithine and carbamoyl phosphate: step 3/3. The sequence is that of Argininosuccinate lyase from Corynebacterium efficiens (strain DSM 44549 / YS-314 / AJ 12310 / JCM 11189 / NBRC 100395).